Reading from the N-terminus, the 251-residue chain is 2,3-bisphosphoglycerate-dependent phosphoglycerate mutase 2 (251 aa).

Substrate contacts are provided by residues 8–15 (RHGESTWN), 21–22 (TG), Arg60, 87–90 (ERHY), Lys98, 114–115 (RR), and 183–184 (GN). His9 acts as the Tele-phosphohistidine intermediate in catalysis. Catalysis depends on Glu87, which acts as the Proton donor/acceptor.

It belongs to the phosphoglycerate mutase family. BPG-dependent PGAM subfamily. In terms of assembly, homodimer.

The catalysed reaction is (2R)-2-phosphoglycerate = (2R)-3-phosphoglycerate. Its pathway is carbohydrate degradation; glycolysis; pyruvate from D-glyceraldehyde 3-phosphate: step 3/5. Functionally, catalyzes the interconversion of 2-phosphoglycerate and 3-phosphoglycerate. The protein is 2,3-bisphosphoglycerate-dependent phosphoglycerate mutase 2 of Nitrosospira multiformis (strain ATCC 25196 / NCIMB 11849 / C 71).